Here is a 776-residue protein sequence, read N- to C-terminus: Mitochondrial intermediate peptidase (776 aa).

The transit peptide at methionine 1–leucine 38 directs the protein to the mitochondrion. Position 560 (histidine 560) interacts with Zn(2+). The active site involves glutamate 561. Residues histidine 564 and histidine 567 each contribute to the Zn(2+) site.

The protein belongs to the peptidase M3 family. It depends on Zn(2+) as a cofactor.

The protein localises to the mitochondrion matrix. It catalyses the reaction Release of an N-terminal octapeptide as second stage of processing of some proteins imported into the mitochondrion.. Cleaves proteins, imported into the mitochondrion, to their mature size. While most mitochondrial precursor proteins are processed to the mature form in one step by mitochondrial processing peptidase (MPP), the sequential cleavage by MIP of an octapeptide after initial processing by MPP is a required step for a subgroup of nuclear-encoded precursor proteins destined for the matrix or the inner membrane. The sequence is that of Mitochondrial intermediate peptidase (OCT1) from Coprinopsis cinerea (strain Okayama-7 / 130 / ATCC MYA-4618 / FGSC 9003) (Inky cap fungus).